Here is a 179-residue protein sequence, read N- to C-terminus: Large ribosomal subunit protein uL6 (179 aa).

This sequence belongs to the universal ribosomal protein uL6 family. As to quaternary structure, part of the 50S ribosomal subunit.

Its function is as follows. This protein binds to the 23S rRNA, and is important in its secondary structure. It is located near the subunit interface in the base of the L7/L12 stalk, and near the tRNA binding site of the peptidyltransferase center. This is Large ribosomal subunit protein uL6 from Leptospira biflexa serovar Patoc (strain Patoc 1 / ATCC 23582 / Paris).